Reading from the N-terminus, the 234-residue chain is Phosphoribosylaminoimidazole-succinocarboxamide synthase (234 aa).

It belongs to the SAICAR synthetase family.

It carries out the reaction 5-amino-1-(5-phospho-D-ribosyl)imidazole-4-carboxylate + L-aspartate + ATP = (2S)-2-[5-amino-1-(5-phospho-beta-D-ribosyl)imidazole-4-carboxamido]succinate + ADP + phosphate + 2 H(+). It functions in the pathway purine metabolism; IMP biosynthesis via de novo pathway; 5-amino-1-(5-phospho-D-ribosyl)imidazole-4-carboxamide from 5-amino-1-(5-phospho-D-ribosyl)imidazole-4-carboxylate: step 1/2. This is Phosphoribosylaminoimidazole-succinocarboxamide synthase from Pyrococcus furiosus (strain ATCC 43587 / DSM 3638 / JCM 8422 / Vc1).